The sequence spans 232 residues: RNA chaperone ProQ (232 aa).

Residues 105-182 form a disordered region; it reads EAKARVQAQR…REEQHTPVSD (78 aa). Basic and acidic residues predominate over residues 117 to 136; it reads QQAKKREAAAAAGEKEDAPR. Positions 137-146 are enriched in basic residues; the sequence is RERKPRPTTP. Basic and acidic residues predominate over residues 147–177; that stretch reads RRKEGAERKPRAQKPVEKAPKTVKAPREEQH.

This sequence belongs to the ProQ family.

It localises to the cytoplasm. In terms of biological role, RNA chaperone with significant RNA binding, RNA strand exchange and RNA duplexing activities. May regulate ProP activity through an RNA-based, post-transcriptional mechanism. This Escherichia coli (strain ATCC 8739 / DSM 1576 / NBRC 3972 / NCIMB 8545 / WDCM 00012 / Crooks) protein is RNA chaperone ProQ.